Reading from the N-terminus, the 151-residue chain is FAD synthase (151 aa).

ATP contacts are provided by residues 21 to 22 (TF), 26 to 29 (HPGH), and D104.

Belongs to the archaeal FAD synthase family. As to quaternary structure, homodimer. The cofactor is a divalent metal cation.

The catalysed reaction is FMN + ATP + H(+) = FAD + diphosphate. It functions in the pathway cofactor biosynthesis; FAD biosynthesis; FAD from FMN: step 1/1. Catalyzes the transfer of the AMP portion of ATP to flavin mononucleotide (FMN) to produce flavin adenine dinucleotide (FAD) coenzyme. This is FAD synthase from Methanosarcina mazei (strain ATCC BAA-159 / DSM 3647 / Goe1 / Go1 / JCM 11833 / OCM 88) (Methanosarcina frisia).